The primary structure comprises 153 residues: Large ribosomal subunit protein uL15 (153 aa).

Residues 21–41 (RGIGSGKGKTGGRGIKGQKSR) form a disordered region. Gly residues predominate over residues 23–35 (IGSGKGKTGGRGI).

The protein belongs to the universal ribosomal protein uL15 family. Part of the 50S ribosomal subunit.

Functionally, binds to the 23S rRNA. In Rickettsia rickettsii (strain Iowa), this protein is Large ribosomal subunit protein uL15.